We begin with the raw amino-acid sequence, 99 residues long: NAD(P)H-quinone oxidoreductase subunit 4L, chloroplastic (99 aa).

Transmembrane regions (helical) follow at residues 1–21 (MFEQGLILSAYLLCVGFFGLI), 31–51 (MSLELIFNAITLNFITLSNLF), and 59–79 (IFTLFVIAVAAAEAATGLAIA).

The protein belongs to the complex I subunit 4L family. NDH is composed of at least 16 different subunits, 5 of which are encoded in the nucleus.

Its subcellular location is the plastid. It localises to the chloroplast thylakoid membrane. The enzyme catalyses a plastoquinone + NADH + (n+1) H(+)(in) = a plastoquinol + NAD(+) + n H(+)(out). It carries out the reaction a plastoquinone + NADPH + (n+1) H(+)(in) = a plastoquinol + NADP(+) + n H(+)(out). In terms of biological role, NDH shuttles electrons from NAD(P)H:plastoquinone, via FMN and iron-sulfur (Fe-S) centers, to quinones in the photosynthetic chain and possibly in a chloroplast respiratory chain. The immediate electron acceptor for the enzyme in this species is believed to be plastoquinone. Couples the redox reaction to proton translocation, and thus conserves the redox energy in a proton gradient. In Adiantum capillus-veneris (Maidenhair fern), this protein is NAD(P)H-quinone oxidoreductase subunit 4L, chloroplastic.